Reading from the N-terminus, the 238-residue chain is MNEMKFLQHLKEKGFELTDEQQKQFAIYYETLVEWNEKINLTAVTEKEEVYLKHFFDSITPSFYFDFNKVKSICDVGAGAGFPSIPLKILYPHLEITIVDSLNKRINFLNHLSAELNLTNCHFVHDRAETFGKGEYRESFDVVTARAVARLSVLSELCLPLVKKGGHFIALKGAQGEIEVEEGLFAISILGGAVVENHPLTLPEEESMRYILDIEKKRQTPKKYPRKPGTPNKEPLLK.

S-adenosyl-L-methionine is bound by residues Gly-77, Phe-82, 128–129, and Arg-146; that span reads AE. The disordered stretch occupies residues 216-238; it reads KKRQTPKKYPRKPGTPNKEPLLK.

This sequence belongs to the methyltransferase superfamily. RNA methyltransferase RsmG family.

It is found in the cytoplasm. In terms of biological role, specifically methylates the N7 position of guanine in position 535 of 16S rRNA. The polypeptide is Ribosomal RNA small subunit methyltransferase G (Macrococcus caseolyticus (strain JCSC5402) (Macrococcoides caseolyticum)).